A 475-amino-acid polypeptide reads, in one-letter code: uncharacterized protein (475 aa).

4Fe-4S ferredoxin-type domains are found at residues 303–333 and 352–381; these read ASEF…GHGY and YKDF…LSKL. Residues Cys-312, Cys-315, Cys-318, Cys-322, Cys-362, Cys-365, Cys-368, and Cys-372 each contribute to the [4Fe-4S] cluster site.

This sequence belongs to the LutB/YkgF family.

This is an uncharacterized protein from Escherichia coli (strain K12).